The sequence spans 267 residues: Alkaline ceramidase 3 (267 aa).

The Cytoplasmic portion of the chain corresponds to 1–33; the sequence is MAPAVDRKGYWGPTTSTLDWCEENYVVTLFVAE. Ca(2+)-binding residues include D19, W20, E22, N24, and E33. The chain crosses the membrane as a helical span at residues 34–55; the sequence is FWNTVSNLIMIIPPIFGAIQGI. Residues 56–61 lie on the Lumenal side of the membrane; that stretch reads RDRLEK. Residues 62-82 traverse the membrane as a helical segment; sequence RYIAAYLALTVVGMGSWCFHM. Residue H81 coordinates Zn(2+). At 83–87 the chain is on the cytoplasmic side; the sequence is TLKYE. Residues 88–108 traverse the membrane as a helical segment; sequence MQLLDELPMIYSCCIFVYCMF. The Lumenal segment spans residues 109-118; it reads ECFKTKSSIN. The helical transmembrane segment at 119 to 139 threads the bilayer; the sequence is YHLLFTLFLYSLTVTTIYLKV. The Cytoplasmic portion of the chain corresponds to 140–141; sequence KE. A helical membrane pass occupies residues 142–162; it reads PIFHQVMYGMLVFTLVLRSIY. Residues 163–173 lie on the Lumenal side of the membrane; sequence IVTWVYPWLRG. A helical membrane pass occupies residues 174–194; it reads LGYTSLTVFLLGFLLWNIDNI. The Cytoplasmic segment spans residues 195–215; sequence FCDSLRNFRKRVPPVLGVTTQ. A helical membrane pass occupies residues 216–236; sequence FHAWWHILTGLGSYLHILFSL. Zn(2+) is bound by residues H217 and H221. Residues 237-267 lie on the Lumenal side of the membrane; sequence YTRTLYLRYRPKVKFLFGIWPAVMFEPQRKH.

It belongs to the alkaline ceramidase family. Requires Zn(2+) as cofactor. In terms of tissue distribution, up-regulated with age in cerebeLlum and cerebrum.

It localises to the endoplasmic reticulum membrane. It is found in the golgi apparatus membrane. It catalyses the reaction an N-acyl-(4R)-4-hydroxysphinganine + H2O = (4R)-hydroxysphinganine + a fatty acid. It carries out the reaction N-(5Z,8Z,11Z,14Z-eicosatetraenoyl)-sphing-4-enine + H2O = sphing-4-enine + (5Z,8Z,11Z,14Z)-eicosatetraenoate. The catalysed reaction is N-(5Z,8Z,11Z,14Z-eicosatetraenoyl)-sphinganine + H2O = sphinganine + (5Z,8Z,11Z,14Z)-eicosatetraenoate. The enzyme catalyses N-(5Z,8Z,11Z,14Z-eicosatetraenoyl)-(4R)-hydroxysphinganine + H2O = (4R)-hydroxysphinganine + (5Z,8Z,11Z,14Z)-eicosatetraenoate. It catalyses the reaction N-(11Z-eicosenoyl)-sphing-4-enine + H2O = (11Z)-eicosenoate + sphing-4-enine. It carries out the reaction N-(11Z-eicosenoyl)-sphinganine + H2O = (11Z)-eicosenoate + sphinganine. The catalysed reaction is N-(11Z-eicosenoyl)-(4R)-hydroxysphinganine + H2O = (11Z)-eicosenoate + (4R)-hydroxysphinganine. The enzyme catalyses N-(9Z-octadecenoyl)-sphing-4-enine + H2O = sphing-4-enine + (9Z)-octadecenoate. It catalyses the reaction N-(9Z-octadecenoyl)-sphinganine + H2O = sphinganine + (9Z)-octadecenoate. It carries out the reaction N-(9Z-octadecenoyl)-(4R)-hydroxysphinganine + H2O = (4R)-hydroxysphinganine + (9Z)-octadecenoate. The catalysed reaction is an N-acylsphing-4-enine + H2O = sphing-4-enine + a fatty acid. The enzyme catalyses an N-acylsphinganine + H2O = sphinganine + a fatty acid. The protein operates within lipid metabolism; sphingolipid metabolism. With respect to regulation, activated by Ca(2+) and inhibited by Zn(2+). Functionally, endoplasmic reticulum and Golgi ceramidase that catalyzes the hydrolysis of unsaturated long-chain C18:1-, C20:1- and C20:4-ceramides, dihydroceramides and phytoceramides into sphingoid bases like sphingosine and free fatty acids at alkaline pH. Ceramides, sphingosine, and its phosphorylated form sphingosine-1-phosphate are bioactive lipids that mediate cellular signaling pathways regulating several biological processes including cell proliferation, apoptosis and differentiation. Controls the generation of sphingosine in erythrocytes, and thereby sphingosine-1-phosphate in plasma. Through the regulation of ceramides and sphingosine-1-phosphate homeostasis in the brain may play a role in neurons survival and function. By regulating the levels of pro-inflammatory ceramides in immune cells and tissues, may modulate the inflammatory response. The chain is Alkaline ceramidase 3 (Acer3) from Mus musculus (Mouse).